The sequence spans 109 residues: Aquaporin-2 (109 aa).

Topologically, residues 1 to 6 (SIAFSR) are cytoplasmic. Residues 7–27 (AVLAEFLATLLFVFFGLGSAL) form a helical membrane-spanning segment. The Extracellular portion of the chain corresponds to 28–35 (NWPQAMPS). The chain crosses the membrane as a helical span at residues 36-54 (VLQIAMAFGLAIGTLVQAL). At 55–59 (GHVSG) the chain is on the cytoplasmic side. Residues 60-69 (AHINPAVTVA) constitute an intramembrane region (discontinuously helical). The NPA 1 motif lies at 63–65 (NPA). At 70–80 (CLVGCHVSFLR) the chain is on the cytoplasmic side. Residues 81–102 (AAFYVAAQLLGAVAGAALLHEI) form a helical membrane-spanning segment. The Extracellular segment spans residues 103-109 (TPPDIRR).

This sequence belongs to the MIP/aquaporin (TC 1.A.8) family. Homotetramer. Serine phosphorylation is necessary and sufficient for expression at the apical membrane. Endocytosis is not phosphorylation-dependent. Post-translationally, N-glycosylated.

The protein resides in the apical cell membrane. It is found in the basolateral cell membrane. Its subcellular location is the cell membrane. It localises to the cytoplasmic vesicle membrane. The protein localises to the golgi apparatus. The protein resides in the trans-Golgi network membrane. It carries out the reaction H2O(in) = H2O(out). The enzyme catalyses glycerol(in) = glycerol(out). Forms a water-specific channel that provides the plasma membranes of renal collecting duct with high permeability to water, thereby permitting water to move in the direction of an osmotic gradient. Plays an essential role in renal water homeostasis. Could also be permeable to glycerol. This is Aquaporin-2 from Equus caballus (Horse).